The primary structure comprises 217 residues: Thymidylate kinase (217 aa).

ATP is bound at residue 7-14; the sequence is GIEGTGKT.

The protein belongs to the thymidylate kinase family.

The enzyme catalyses dTMP + ATP = dTDP + ADP. Its function is as follows. Phosphorylation of dTMP to form dTDP in both de novo and salvage pathways of dTTP synthesis. The protein is Thymidylate kinase of Maridesulfovibrio salexigens (strain ATCC 14822 / DSM 2638 / NCIMB 8403 / VKM B-1763) (Desulfovibrio salexigens).